We begin with the raw amino-acid sequence, 289 residues long: MVLISNTLHCADAYSSADSKHVPLTLSTRRINLQSFQSISARNCGSDARVLDFVKSIDNDNSWKRRNLDSKRNIGSRKKNRFLNDLHILKQAADDPDEVVYKDLFTHRPAFGFLTVGDEFYKDGVNNISSLLTSSSNQRFNDNHHKSIVKRIRHEIKCYNSLQLVLLLDECLNNIMNEKLYAYDHDHSPAIYASESFNIKAEIDTSSFLETQRSYRIYMLIDCPSNPKATAFARYWMHLICSYYGIYTTSTQILSNKIMTLGVSKKRKHLSFKTLSELLNHDELTNINR.

This is an uncharacterized protein from Schizosaccharomyces pombe (strain 972 / ATCC 24843) (Fission yeast).